The sequence spans 445 residues: C4-dicarboxylate transport protein (445 aa).

8 helical membrane passes run 17–37, 56–76, 91–111, 157–177, 200–220, 233–253, 319–339, and 367–387; these read FYQILYVQVLVAIVIGVLLGY, LVKMIIAPVIFLTVTTGIAAM, VYFLVFSTLALIIGMVVSHIV, FVGGDILQVLFVAVLFGLSLA, LVAILMKAAPIGAFGAMAFTI, MLVGTFYATSVLFVVVVLGMV, IYMTMAALFIAQACDIPLSLG, and AATLSVVPTVPVAGMALILGV.

Belongs to the dicarboxylate/amino acid:cation symporter (DAACS) (TC 2.A.23) family.

The protein localises to the cell inner membrane. In terms of biological role, responsible for the transport of dicarboxylates such as succinate, fumarate, and malate from the periplasm across the membrane. The polypeptide is C4-dicarboxylate transport protein (Bordetella avium (strain 197N)).